We begin with the raw amino-acid sequence, 239 residues long: DnaA regulatory inactivator Hda (239 aa).

The protein belongs to the DnaA family. HdA subfamily. The active form seems to be an ADP-bound monomer. Forms the RIDA complex (regulatory inactivation of DnaA) of ATP-DnaA, ADP-Hda and the DNA-loaded beta sliding clamp (dnaN).

In terms of biological role, mediates the interaction of DNA replication initiator protein DnaA with DNA polymerase subunit beta sliding clamp (dnaN). Stimulates hydrolysis of ATP-DnaA to ADP-DnaA, rendering DnaA inactive for reinitiation, a process called regulatory inhibition of DnaA or RIDA. This chain is DnaA regulatory inactivator Hda, found in Yersinia pseudotuberculosis serotype O:1b (strain IP 31758).